A 739-amino-acid chain; its full sequence is Sulfate transporter (739 aa).

Basic and acidic residues-rich tracts occupy residues 1 to 17 and 31 to 46; these read MSSENKEQHDLSPRDLP and TQRRSGTDLRQSETGH. Residues 1–47 form a disordered region; sequence MSSENKEQHDLSPRDLPEEAFGFPSELPLETQRRSGTDLRQSETGHG. Position 12 is a phosphoserine (serine 12). 2 helical membrane-spanning segments follow: residues 112–132 and 137–157; these read VMSGLIVGILLVPQSIAYSLL and PIYGLYTSFFASIIYFLFGTS. Asparagine 205 is a glycosylation site (N-linked (GlcNAc...) asparagine). 2 helical membrane passes run 227-247 and 255-275; these read FMAGVYQVAMGFFQVGFVSVY and GFVTGASFTILTSQAKYLLGL. Asparagine 357 is a glycosylation site (N-linked (GlcNAc...) asparagine). The next 4 membrane-spanning stretches (helical) occupy residues 378 to 398, 420 to 440, 455 to 475, and 524 to 544; these read LIPNVAVDAIAISIIGFAITV, AIGFCNIIPSFFHCITTSAAL, LSAIVTALVLLLVLLVIAPLF, and LLSTEIGLLVGVCFSMFCVIL. The STAS domain occupies 568-719; sequence TYKNLRSKSG…YSLSEAVAFA (152 aa).

Belongs to the SLC26A/SulP transporter (TC 2.A.53) family. In terms of processing, N-glycosylated. As to expression, distributed mainly in the thymus, testis and osteoblastic cells. Highly expressed in the bone, cartilage, kidney and colon.

It localises to the cell membrane. Its subcellular location is the apical cell membrane. The catalysed reaction is oxalate(in) + sulfate(out) = oxalate(out) + sulfate(in). It catalyses the reaction sulfate(out) + 2 chloride(in) = sulfate(in) + 2 chloride(out). It carries out the reaction oxalate(out) + 2 chloride(in) = oxalate(in) + 2 chloride(out). The enzyme catalyses bromide(in) + chloride(out) = bromide(out) + chloride(in). The catalysed reaction is nitrate(in) + chloride(out) = nitrate(out) + chloride(in). It catalyses the reaction iodide(in) + chloride(out) = iodide(out) + chloride(in). In terms of biological role, sulfate transporter which mediates sulfate uptake into chondrocytes in order to maintain adequate sulfation of proteoglycans which is needed for cartilage development. Mediates electroneutral anion exchange of sulfate ions for oxalate ions, sulfate and oxalate ions for chloride and/or hydroxyl ions and chloride ions for bromide, iodide and nitrate ions. The coupling of sulfate transport to both hydroxyl and chloride ions likely serves to ensure transport at both acidic pH when most sulfate uptake is mediated by sulfate-hydroxide exchange and alkaline pH when most sulfate uptake is mediated by sulfate-chloride exchange. Essential for chondrocyte proliferation, differentiation and cell size expansion. This chain is Sulfate transporter (Slc26a2), found in Mus musculus (Mouse).